Here is a 234-residue protein sequence, read N- to C-terminus: ATP-dependent dethiobiotin synthetase BioD (234 aa).

14–19 (GVGKTI) contributes to the ATP binding site. Thr-18 is a binding site for Mg(2+). Lys-39 is an active-site residue. A substrate-binding site is contributed by Ser-43. ATP-binding positions include Asp-56, 118–121 (EGAG), 178–179 (NH), and 208–210 (PWL). Mg(2+)-binding residues include Asp-56 and Glu-118.

This sequence belongs to the dethiobiotin synthetase family. As to quaternary structure, homodimer. Requires Mg(2+) as cofactor.

It is found in the cytoplasm. It carries out the reaction (7R,8S)-7,8-diammoniononanoate + CO2 + ATP = (4R,5S)-dethiobiotin + ADP + phosphate + 3 H(+). It functions in the pathway cofactor biosynthesis; biotin biosynthesis; biotin from 7,8-diaminononanoate: step 1/2. In terms of biological role, catalyzes a mechanistically unusual reaction, the ATP-dependent insertion of CO2 between the N7 and N8 nitrogen atoms of 7,8-diaminopelargonic acid (DAPA, also called 7,8-diammoniononanoate) to form a ureido ring. This Marinobacter nauticus (strain ATCC 700491 / DSM 11845 / VT8) (Marinobacter aquaeolei) protein is ATP-dependent dethiobiotin synthetase BioD.